Here is a 145-residue protein sequence, read N- to C-terminus: MRHGMANKKLNRTSEHRKALLKNMLNSLIKYEQITTTLPKAKFLKPQADKIITLGKKETLQTTKMLMSKLQDITSANKVKKTLSKRYEARNGGYTRIIKAGFRYGDNAPMAVIEFVDRDVEAKRVDRKKKDPAKDKTEEKKLATA.

The segment at 123 to 145 (KRVDRKKKDPAKDKTEEKKLATA) is disordered.

It belongs to the bacterial ribosomal protein bL17 family. As to quaternary structure, part of the 50S ribosomal subunit. Contacts protein L32.

The sequence is that of Large ribosomal subunit protein bL17 from Pelagibacter ubique (strain HTCC1062).